A 260-amino-acid chain; its full sequence is Phosphate import ATP-binding protein PstB 1 (260 aa).

Positions 13–255 (ISARDLNVHY…PQHPLTQGYI (243 aa)) constitute an ABC transporter domain. 45-52 (GPSGCGKS) is an ATP binding site.

Belongs to the ABC transporter superfamily. Phosphate importer (TC 3.A.1.7) family. As to quaternary structure, the complex is composed of two ATP-binding proteins (PstB), two transmembrane proteins (PstC and PstA) and a solute-binding protein (PstS).

It is found in the cell inner membrane. It carries out the reaction phosphate(out) + ATP + H2O = ADP + 2 phosphate(in) + H(+). In terms of biological role, part of the ABC transporter complex PstSACB involved in phosphate import. Responsible for energy coupling to the transport system. The chain is Phosphate import ATP-binding protein PstB 1 from Paramagnetospirillum magneticum (strain ATCC 700264 / AMB-1) (Magnetospirillum magneticum).